The following is a 342-amino-acid chain: Ribosomal RNA small subunit methyltransferase C (342 aa).

It belongs to the methyltransferase superfamily. RsmC family. In terms of assembly, monomer.

It localises to the cytoplasm. The enzyme catalyses guanosine(1207) in 16S rRNA + S-adenosyl-L-methionine = N(2)-methylguanosine(1207) in 16S rRNA + S-adenosyl-L-homocysteine + H(+). Functionally, specifically methylates the guanine in position 1207 of 16S rRNA in the 30S particle. This is Ribosomal RNA small subunit methyltransferase C from Cronobacter sakazakii (strain ATCC BAA-894) (Enterobacter sakazakii).